The sequence spans 256 residues: Uridylate kinase (256 aa).

Residue 10–13 coordinates ATP; that stretch reads KLSG. Position 52 (Gly-52) interacts with UMP. Residues Gly-53 and Arg-57 each coordinate ATP. Residues Asp-72 and 134–141 each bind UMP; that span reads NGQPFLTT. 2 residues coordinate ATP: Tyr-168 and Asp-171.

This sequence belongs to the UMP kinase family. Homohexamer.

Its subcellular location is the cytoplasm. The catalysed reaction is UMP + ATP = UDP + ADP. It participates in pyrimidine metabolism; CTP biosynthesis via de novo pathway; UDP from UMP (UMPK route): step 1/1. Its activity is regulated as follows. Inhibited by UTP. Catalyzes the reversible phosphorylation of UMP to UDP. This chain is Uridylate kinase, found in Frankia alni (strain DSM 45986 / CECT 9034 / ACN14a).